The primary structure comprises 596 residues: uncharacterized protein (596 aa).

2 stretches are compositionally biased toward basic residues: residues 1 to 10 (MRLRSQKRGN) and 18 to 29 (KTRKGKGKKLKP). A disordered region spans residues 1–30 (MRLRSQKRGNKFVALPAKTRKGKGKKLKPK).

This is an uncharacterized protein from Magallana gigas (Pacific oyster).